Here is a 144-residue protein sequence, read N- to C-terminus: Ribosome maturation factor RimP (144 aa).

The protein belongs to the RimP family.

It localises to the cytoplasm. Its function is as follows. Required for maturation of 30S ribosomal subunits. In Methylobacillus flagellatus (strain ATCC 51484 / DSM 6875 / VKM B-1610 / KT), this protein is Ribosome maturation factor RimP.